We begin with the raw amino-acid sequence, 326 residues long: Biotin synthase (326 aa).

Positions 51–275 (NAVQRSTLLS…MMPTSFVRLS (225 aa)) constitute a Radical SAM core domain. Positions 66, 70, and 73 each coordinate [4Fe-4S] cluster. [2Fe-2S] cluster is bound by residues Cys110, Cys141, Cys201, and Arg273.

The protein belongs to the radical SAM superfamily. Biotin synthase family. In terms of assembly, homodimer. The cofactor is [4Fe-4S] cluster. Requires [2Fe-2S] cluster as cofactor.

It catalyses the reaction (4R,5S)-dethiobiotin + (sulfur carrier)-SH + 2 reduced [2Fe-2S]-[ferredoxin] + 2 S-adenosyl-L-methionine = (sulfur carrier)-H + biotin + 2 5'-deoxyadenosine + 2 L-methionine + 2 oxidized [2Fe-2S]-[ferredoxin]. It participates in cofactor biosynthesis; biotin biosynthesis; biotin from 7,8-diaminononanoate: step 2/2. Its function is as follows. Catalyzes the conversion of dethiobiotin (DTB) to biotin by the insertion of a sulfur atom into dethiobiotin via a radical-based mechanism. The polypeptide is Biotin synthase (Aromatoleum aromaticum (strain DSM 19018 / LMG 30748 / EbN1) (Azoarcus sp. (strain EbN1))).